A 61-amino-acid polypeptide reads, in one-letter code: Beta-insect depressant toxin BotIT5 (61 aa).

Residues 1–61 (DGYIRKRDGC…TWKSETNTCG (61 aa)) form the LCN-type CS-alpha/beta domain. Cystine bridges form between C10–C60, C14–C35, C21–C42, and C25–C44. G61 is subject to Glycine amide.

The protein belongs to the long (4 C-C) scorpion toxin superfamily. Sodium channel inhibitor family. Beta subfamily. In terms of tissue distribution, expressed by the venom gland.

It is found in the secreted. Functionally, depressant insect beta-toxins cause a transient contraction paralysis followed by a slow flaccid paralysis. They bind voltage-independently at site-4 of sodium channels (Nav) and shift the voltage of activation toward more negative potentials thereby affecting sodium channel activation and promoting spontaneous and repetitive firing. This toxin is active only on insects. The chain is Beta-insect depressant toxin BotIT5 from Buthus occitanus tunetanus (Common European scorpion).